Consider the following 98-residue polypeptide: NADH-ubiquinone oxidoreductase chain 4L (98 aa).

Helical transmembrane passes span 1-21, 29-49, and 61-81; these read MSMV…GLLM, SLLC…LMIL, and IILL…LVMI.

Belongs to the complex I subunit 4L family. Core subunit of respiratory chain NADH dehydrogenase (Complex I) which is composed of 45 different subunits.

The protein resides in the mitochondrion inner membrane. It carries out the reaction a ubiquinone + NADH + 5 H(+)(in) = a ubiquinol + NAD(+) + 4 H(+)(out). Its function is as follows. Core subunit of the mitochondrial membrane respiratory chain NADH dehydrogenase (Complex I) which catalyzes electron transfer from NADH through the respiratory chain, using ubiquinone as an electron acceptor. Part of the enzyme membrane arm which is embedded in the lipid bilayer and involved in proton translocation. The chain is NADH-ubiquinone oxidoreductase chain 4L (MT-ND4L) from Vicugna pacos (Alpaca).